Here is a 379-residue protein sequence, read N- to C-terminus: Lipid-A-disaccharide synthase (379 aa).

Belongs to the LpxB family.

It catalyses the reaction a lipid X + a UDP-2-N,3-O-bis[(3R)-3-hydroxyacyl]-alpha-D-glucosamine = a lipid A disaccharide + UDP + H(+). It functions in the pathway bacterial outer membrane biogenesis; LPS lipid A biosynthesis. Functionally, condensation of UDP-2,3-diacylglucosamine and 2,3-diacylglucosamine-1-phosphate to form lipid A disaccharide, a precursor of lipid A, a phosphorylated glycolipid that anchors the lipopolysaccharide to the outer membrane of the cell. This Persephonella marina (strain DSM 14350 / EX-H1) protein is Lipid-A-disaccharide synthase.